The chain runs to 1032 residues: Exportin-T (1032 aa).

This sequence belongs to the exportin family.

Its subcellular location is the nucleus. It localises to the cytoplasm. Functionally, tRNA nucleus export receptor which facilitates tRNA translocation across the nuclear pore complex. Involved in pre-tRNA splicing, probably by affecting the interaction of pre-tRNA with splicing endonuclease. This is Exportin-T (los1) from Aspergillus fumigatus (strain ATCC MYA-4609 / CBS 101355 / FGSC A1100 / Af293) (Neosartorya fumigata).